Here is a 245-residue protein sequence, read N- to C-terminus: MLRTGVIAKKLGMTRLFLEDGRQVPVTVLHVDNVQVIAQRTAEQDGYVALQLGAGEAKAKRTTAALRGHFAKANVAPKRKIAEFRVSPENLVEVGEEIVADHYFEGQYVDIAGTSIGKGFAGAMKRHNFGGLRASHGVSISHRSHGSTGQCQDPGKVFKGKKMAGHLGAVRVTTQNLQVVKTDAERGLIMVKGSVPGSKGGWVTIKDAVKKPLAESTVFPAATRSKAVQAEAAAPAEAAAPEGDN.

Glutamine 152 bears the N5-methylglutamine mark. The tract at residues 224–245 (RSKAVQAEAAAPAEAAAPEGDN) is disordered. Over residues 230-245 (AEAAAPAEAAAPEGDN) the composition is skewed to low complexity.

This sequence belongs to the universal ribosomal protein uL3 family. In terms of assembly, part of the 50S ribosomal subunit. Forms a cluster with proteins L14 and L19. In terms of processing, methylated by PrmB.

Functionally, one of the primary rRNA binding proteins, it binds directly near the 3'-end of the 23S rRNA, where it nucleates assembly of the 50S subunit. The protein is Large ribosomal subunit protein uL3 of Paracoccus denitrificans (strain Pd 1222).